The sequence spans 626 residues: Chaperone protein HtpG (626 aa).

The segment at 1–338 is a; substrate-binding; sequence MTANKNQKKT…SNDLPLNVSR (338 aa). The segment at 339 to 553 is b; it reads EILQDHKLVY…SNEMSTQMAK (215 aa). The tract at residues 554 to 626 is c; it reads LFSAAGQTVP…ARINDLLINN (73 aa).

Belongs to the heat shock protein 90 family. Homodimer.

The protein localises to the cytoplasm. Its function is as follows. Molecular chaperone. Has ATPase activity. The sequence is that of Chaperone protein HtpG from Buchnera aphidicola subsp. Baizongia pistaciae (strain Bp).